Consider the following 121-residue polypeptide: Peptidyl-tRNA hydrolase (121 aa).

This sequence belongs to the PTH2 family.

It is found in the cytoplasm. The catalysed reaction is an N-acyl-L-alpha-aminoacyl-tRNA + H2O = an N-acyl-L-amino acid + a tRNA + H(+). Its function is as follows. The natural substrate for this enzyme may be peptidyl-tRNAs which drop off the ribosome during protein synthesis. This is Peptidyl-tRNA hydrolase from Staphylothermus marinus (strain ATCC 43588 / DSM 3639 / JCM 9404 / F1).